Consider the following 93-residue polypeptide: Putative pterin-4-alpha-carbinolamine dehydratase (93 aa).

It belongs to the pterin-4-alpha-carbinolamine dehydratase family.

It catalyses the reaction (4aS,6R)-4a-hydroxy-L-erythro-5,6,7,8-tetrahydrobiopterin = (6R)-L-erythro-6,7-dihydrobiopterin + H2O. The chain is Putative pterin-4-alpha-carbinolamine dehydratase from Mycolicibacterium vanbaalenii (strain DSM 7251 / JCM 13017 / BCRC 16820 / KCTC 9966 / NRRL B-24157 / PYR-1) (Mycobacterium vanbaalenii).